The following is a 220-amino-acid chain: MGKKKQKKGQGSRLEVIFDEEKRREYLTGFHKRKMQRRKTAVEEIKRKIKEEQKKMKEERHKEYMKMLKEREEALCELEENDELEEMVTSKTESVRYDHPNHTVTVTTISDLDLSGIRVPPLGNAEQKQEEEKVEEENEKGADEEKPKTSVSLPKKSGDPFLSKKICSLTASLHARSQRKSGKRPSRTNENKKQTSSKMSGRTSKTQRRKQTGKTRRRRN.

Residues 31 to 86 (HKRKMQRRKTAVEEIKRKIKEEQKKMKEERHKEYMKMLKEREEALCELEENDELEE) adopt a coiled-coil conformation. The disordered stretch occupies residues 109-220 (ISDLDLSGIR…QTGKTRRRRN (112 aa)). A compositionally biased stretch (basic and acidic residues) spans 139-148 (EKGADEEKPK). Composition is skewed to basic residues over residues 176 to 186 (RSQRKSGKRPS) and 205 to 220 (KTQRRKQTGKTRRRRN).

It belongs to the RRP17 family.

It is found in the nucleus. It localises to the nucleolus. May bind to rRNA. The protein is Nucleolar protein 12 (nol12) of Xenopus laevis (African clawed frog).